A 190-amino-acid polypeptide reads, in one-letter code: Small ribosomal subunit protein eS7A (190 aa).

Residue serine 2 is modified to N-acetylserine. Glycyl lysine isopeptide (Lys-Gly) (interchain with G-Cter in ubiquitin) cross-links involve residues lysine 83, lysine 84, and lysine 124.

Belongs to the eukaryotic ribosomal protein eS7 family. Component of the small ribosomal subunit (SSU). Mature yeast ribosomes consist of a small (40S) and a large (60S) subunit. The 40S small subunit contains 1 molecule of ribosomal RNA (18S rRNA) and 33 different proteins (encoded by 57 genes). The large 60S subunit contains 3 rRNA molecules (25S, 5.8S and 5S rRNA) and 46 different proteins (encoded by 81 genes). Interacts with snoRNA U3. uS11 interacts with MPP10. Component of the ribosomal small subunit (SSU) processome composed of at least 40 protein subunits and snoRNA U3. Post-translationally, N-terminally acetylated by acetyltransferase NatA. In terms of processing, ubiquitinated at Lys-83 and Lys-84 in response to stalled ribosomes, leading to activation of the No-Go Decay (NGD) pathway: first monoubiquitinated by MOT2/NOT4, followed by formation by HEL2 of 'Lys-63'-linked polyubiquitin chains on monoubiquitin.

It localises to the cytoplasm. It is found in the nucleus. Its subcellular location is the nucleolus. Component of the ribosome, a large ribonucleoprotein complex responsible for the synthesis of proteins in the cell. The small ribosomal subunit (SSU) binds messenger RNAs (mRNAs) and translates the encoded message by selecting cognate aminoacyl-transfer RNA (tRNA) molecules. The large subunit (LSU) contains the ribosomal catalytic site termed the peptidyl transferase center (PTC), which catalyzes the formation of peptide bonds, thereby polymerizing the amino acids delivered by tRNAs into a polypeptide chain. The nascent polypeptides leave the ribosome through a tunnel in the LSU and interact with protein factors that function in enzymatic processing, targeting, and the membrane insertion of nascent chains at the exit of the ribosomal tunnel. eS7 is involved in nucleolar processing of pre-18S ribosomal RNA and ribosome assembly. This Saccharomyces cerevisiae (strain ATCC 204508 / S288c) (Baker's yeast) protein is Small ribosomal subunit protein eS7A.